We begin with the raw amino-acid sequence, 409 residues long: Na(+)-translocating NADH-quinone reductase subunit F (409 aa).

Residues 5 to 25 form a helical membrane-spanning segment; that stretch reads FIFGIIAFTALVLVLAVIILF. Residues 34–128 enclose the 2Fe-2S ferredoxin-type domain; the sequence is GDITISINND…SMDVELPEEI (95 aa). The [2Fe-2S] cluster site is built by Cys71, Cys77, Cys80, and Cys112. In terms of domain architecture, FAD-binding FR-type spans 131 to 271; that stretch reads VKKWECTVIS…SGPFGEFFAK (141 aa).

Belongs to the NqrF family. In terms of assembly, composed of six subunits; NqrA, NqrB, NqrC, NqrD, NqrE and NqrF. It depends on [2Fe-2S] cluster as a cofactor. The cofactor is FAD.

Its subcellular location is the cell inner membrane. The enzyme catalyses a ubiquinone + n Na(+)(in) + NADH + H(+) = a ubiquinol + n Na(+)(out) + NAD(+). NQR complex catalyzes the reduction of ubiquinone-1 to ubiquinol by two successive reactions, coupled with the transport of Na(+) ions from the cytoplasm to the periplasm. The first step is catalyzed by NqrF, which accepts electrons from NADH and reduces ubiquinone-1 to ubisemiquinone by a one-electron transfer pathway. The polypeptide is Na(+)-translocating NADH-quinone reductase subunit F (Actinobacillus pleuropneumoniae serotype 5b (strain L20)).